The sequence spans 448 residues: Fibulin-5 (448 aa).

A signal peptide spans 1 to 23; the sequence is MPGLKRILTVTILALWLPHPGNA. The 41-residue stretch at 42–82 folds into the EGF-like 1; calcium-binding domain; sequence DIDECRTIPEACRGDMMCVNQNGGYLCIPRTNPVYRGPYSN. 17 disulfides stabilise this stretch: Cys-46/Cys-59, Cys-53/Cys-68, Cys-131/Cys-144, Cys-138/Cys-153, Cys-155/Cys-166, Cys-172/Cys-181, Cys-177/Cys-190, Cys-192/Cys-205, Cys-211/Cys-221, Cys-217/Cys-230, Cys-232/Cys-245, Cys-251/Cys-262, Cys-258/Cys-271, Cys-273/Cys-286, Cys-292/Cys-305, Cys-299/Cys-314, and Cys-320/Cys-332. Residues 54-56 carry the Cell attachment site motif; sequence RGD. Residues 127 to 167 enclose the EGF-like 2; calcium-binding domain; the sequence is DVDECATDSHQCNPTQICINTEGGYTCSCTDGYWLLEGQCL. The EGF-like 3; calcium-binding domain maps to 168–206; it reads DIDECRYGYCQQLCANVPGSYSCTCNPGFTLNDDGRSCQ. Residues 207–246 form the EGF-like 4; calcium-binding domain; that stretch reads DVNECETENPCVQTCVNTYGSFICRCDPGYELEEDGIHCS. An interaction with LOXL1 region spans residues 245 to 448; it reads CSDMDECSFS…LRIYVSQYPF (204 aa). One can recognise an EGF-like 5; calcium-binding domain in the interval 247–287; that stretch reads DMDECSFSEFLCQHECVNQPGSYFCSCPPGYVLLEDNRSCQ. 2 N-linked (GlcNAc...) asparagine glycosylation sites follow: Asn-283 and Asn-296. Residues 288-333 enclose the EGF-like 6; calcium-binding domain; that stretch reads DINECEHRNHTCTPLQTCYNLQGGFKCIDPIVCEEPYLLIGDNRCM.

It belongs to the fibulin family. As to quaternary structure, homodimer. Monomer, homodimerizes in presence of Ca(2+). Interacts with ELN. Interacts (via N-terminus) with the integrins ITGAV/ITGB3, ITGAV/ITGB5 and ITGA9/ITGB1. Interacts with FBN1 (via N-terminal domain). Forms a ternary complex with ELN and FBN1. Interacts with EFEMP2 with moderate affinity. Interacts with LOXL1. In terms of processing, N-glycosylated.

Its subcellular location is the secreted. It localises to the extracellular space. The protein localises to the extracellular matrix. Essential for elastic fiber formation, is involved in the assembly of continuous elastin (ELN) polymer and promotes the interaction of microfibrils and ELN. Stabilizes and organizes elastic fibers in the skin, lung and vasculature. Promotes adhesion of endothelial cells through interaction of integrins and the RGD motif. Vascular ligand for integrin receptors which may play a role in vascular development and remodeling. May act as an adapter that mediates the interaction between FBN1 and ELN. The sequence is that of Fibulin-5 (Fbln5) from Rattus norvegicus (Rat).